The following is a 129-amino-acid chain: MNWLDEVSWDEKGLIPVIAQEASSGDVLMFAWMNREALQKTAELGQAVYYSRSRGRLWHKGEESGHLQTVHEIRLDCDNDVVLLKVTQLGHEPGIACHTGRHSCFFHLYKDGQWVVTEPVLKDPGSIYK.

Residue Asp-76 participates in Mg(2+) binding. A Zn(2+)-binding site is contributed by Cys-77. The Mg(2+) site is built by Asp-78 and Asp-80. The Zn(2+) site is built by Cys-97 and Cys-104.

This sequence belongs to the PRA-CH family. Homodimer. Mg(2+) is required as a cofactor. Zn(2+) serves as cofactor.

The protein resides in the cytoplasm. The catalysed reaction is 1-(5-phospho-beta-D-ribosyl)-5'-AMP + H2O = 1-(5-phospho-beta-D-ribosyl)-5-[(5-phospho-beta-D-ribosylamino)methylideneamino]imidazole-4-carboxamide. It participates in amino-acid biosynthesis; L-histidine biosynthesis; L-histidine from 5-phospho-alpha-D-ribose 1-diphosphate: step 3/9. Its function is as follows. Catalyzes the hydrolysis of the adenine ring of phosphoribosyl-AMP. This is Phosphoribosyl-AMP cyclohydrolase from Polaromonas sp. (strain JS666 / ATCC BAA-500).